The primary structure comprises 451 residues: MKFIDWIKPGIKLKRWIMLGGMGVLFISFALAELITKGSYYNVYYKAFYIFLIVVGAFILYISLTQGMKSIISLINKGYLNVSLDSRKLGNLIYEKRLLVKGPKIVAIGGGTGLSTMLRGLKYYTSNITAVVTVADDGGGSGALREDLGILPPGDIRNCILALSDTEPLMEDLLQYRFKDGRLKNQSFGNLFLAAMDGISTNFEEAVHKMSSVLAVTGKVLPVTLDNVVLKAKLKNGVVVEGESNIPEQAILYESPIEKIFIEPENARALHETVQAIKEADAVILGPGSLFTSVIPNLLVKDIGNALLKTKALKLYVSNIMTQPGETDNFSVSDHVNAITKHVGGKVVDYTLVNNGTVSEKLKKKYFEKTSELVKIDKNELDKIGVGIVEGNFIKIKDGFVRHDSDEIAKILVETIMDKKLFYDRKKIIEYFYLSQRLKENRKLEKENRGN.

It belongs to the gluconeogenesis factor family.

The protein localises to the cytoplasm. Its function is as follows. Required for morphogenesis under gluconeogenic growth conditions. The protein is Putative gluconeogenesis factor of Clostridium acetobutylicum (strain ATCC 824 / DSM 792 / JCM 1419 / IAM 19013 / LMG 5710 / NBRC 13948 / NRRL B-527 / VKM B-1787 / 2291 / W).